Reading from the N-terminus, the 296-residue chain is Pseudouridine-5'-phosphate glycosidase (296 aa).

The active-site Proton donor is Glu21. The substrate site is built by Lys81 and Val101. A Mn(2+)-binding site is contributed by Asp130. 132–134 is a binding site for substrate; it reads SQD. Residue Lys151 is the Nucleophile of the active site.

This sequence belongs to the pseudouridine-5'-phosphate glycosidase family. As to quaternary structure, homotrimer. Requires Mn(2+) as cofactor.

It catalyses the reaction D-ribose 5-phosphate + uracil = psi-UMP + H2O. Functionally, catalyzes the reversible cleavage of pseudouridine 5'-phosphate (PsiMP) to ribose 5-phosphate and uracil. Functions biologically in the cleavage direction, as part of a pseudouridine degradation pathway. The chain is Pseudouridine-5'-phosphate glycosidase from Fervidobacterium nodosum (strain ATCC 35602 / DSM 5306 / Rt17-B1).